The sequence spans 727 residues: Sodium-dependent neutral amino acid transporter SLC6A17 (727 aa).

The Cytoplasmic segment spans residues 1 to 69 (MPKNSKVTQR…RPAWNSKLQY (69 aa)). Residues serine 13 and serine 20 each carry the phosphoserine modification. A helical membrane pass occupies residues 70 to 90 (ILAQIGFSVGLGNIWRFPYLC). Over 91 to 95 (QKNGG) the chain is Extracellular. The helical transmembrane segment at 96 to 116 (GAYLVPYLVLLIIIGIPLFFL) threads the bilayer. At 117–147 (ELAVGQRIRRGSIGVWHYICPRLGGIGFSSC) the chain is on the cytoplasmic side. Residues 148–168 (IVCLFVGLYYNVIIGWSIFYF) traverse the membrane as a helical segment. Residues 169–222 (FKSFQYPLPWSECPVVRNGSVAVVEAECEKSSATTYFWYREALDISDSISESGG) lie on the Extracellular side of the membrane. Residue asparagine 186 is glycosylated (N-linked (GlcNAc...) asparagine). A helical transmembrane segment spans residues 223 to 243 (LNWKMTLCLLVAWSIVGMAVV). Residues 244–253 (KGIQSSGKVM) are Cytoplasmic-facing. The helical transmembrane segment at 254 to 274 (YFSSLFPYVVLACFLVRGLLL) threads the bilayer. The Extracellular segment spans residues 275 to 300 (RGAVDGILHMFTPKLDKMLDPQVWRE). A helical membrane pass occupies residues 301 to 321 (AATQVFFALGLGFGGVIAFSS). Residues 322 to 334 (YNKQDNNCHFDAA) are Cytoplasmic-facing. The helical transmembrane segment at 335–355 (LVSFINFFTSVLATLVVFAVL) threads the bilayer. Residues 356–460 (GFKANIMNEK…HFPASPFWSV (105 aa)) lie on the Extracellular side of the membrane. Tyrosine 377 bears the Phosphotyrosine mark. N-linked (GlcNAc...) asparagine glycosylation is present at asparagine 393. The helical transmembrane segment at 461–481 (MFFLMLINLGLGSMIGTMAGI) threads the bilayer. Residues 482-490 (TTPIIDTFK) lie on the Cytoplasmic side of the membrane. Residues 491-511 (VPKEMFTVGCCVFAFLVGLLF) traverse the membrane as a helical segment. The Extracellular segment spans residues 512 to 527 (VQRSGNYFVTMFDDYS). A helical membrane pass occupies residues 528 to 548 (ATLPLTLIVILENIAVAWIYG). Over 549–573 (TKKFMQELTEMLGFRPYRFYFYMWK) the chain is Cytoplasmic. A helical membrane pass occupies residues 574–594 (FVSPLCMAVLTTASIIQLGVT). Topologically, residues 595–617 (PPGYSAWIKEEAAERYLYFPNWA) are extracellular. Residues 618-638 (MALLITLIVVATLPIPVVFVL) form a helical membrane-spanning segment. Over 639 to 727 (RHFHLLSDGS…LLASTPESEL (89 aa)) the chain is Cytoplasmic. Phosphoserine occurs at positions 665 and 701. Residues 680-727 (VPSEAPSPMPTHRSYLGPGSTSPLETSGNPNGRYGSGYLLASTPESEL) are disordered. A compositionally biased stretch (polar residues) spans 698-709 (GSTSPLETSGNP).

The protein belongs to the sodium:neurotransmitter symporter (SNF) (TC 2.A.22) family.

It is found in the cytoplasmic vesicle. It localises to the secretory vesicle. The protein resides in the synaptic vesicle membrane. The protein localises to the postsynapse. Its subcellular location is the presynapse. The catalysed reaction is L-proline(in) + Na(+)(in) = L-proline(out) + Na(+)(out). It catalyses the reaction L-leucine(in) + Na(+)(in) = L-leucine(out) + Na(+)(out). The enzyme catalyses glycine(in) + Na(+)(in) = glycine(out) + Na(+)(out). It carries out the reaction L-alanine(in) + Na(+)(in) = L-alanine(out) + Na(+)(out). The catalysed reaction is L-glutamine(in) + Na(+)(in) = L-glutamine(out) + Na(+)(out). Functionally, synaptic vesicle transporter with apparent selectivity for neutral amino acids. The transport is sodium-coupled but chloride-independent, likely driven by the proton electrochemical gradient generated by vacuolar H(+)-ATPase in an overall electrogenic mechanism. May contribute to the synaptic uptake of neurotransmitter precursors in a process coupled in part to vesicle exocytosis. This Homo sapiens (Human) protein is Sodium-dependent neutral amino acid transporter SLC6A17.